The chain runs to 431 residues: Peptidase B (431 aa).

Mn(2+) contacts are provided by lysine 196 and aspartate 201. Lysine 208 is a catalytic residue. Aspartate 219, aspartate 278, and glutamate 280 together coordinate Mn(2+). The active site involves arginine 282.

Belongs to the peptidase M17 family. In terms of assembly, homohexamer. It depends on Mn(2+) as a cofactor.

The protein localises to the cytoplasm. The catalysed reaction is Release of an N-terminal amino acid, Xaa, from a peptide or arylamide. Xaa is preferably Glu or Asp but may be other amino acids, including Leu, Met, His, Cys and Gln.. Functionally, probably plays an important role in intracellular peptide degradation. The chain is Peptidase B from Vibrio atlanticus (strain LGP32) (Vibrio splendidus (strain Mel32)).